Consider the following 168-residue polypeptide: Crossover junction endodeoxyribonuclease RuvC (168 aa).

Residues Asp-10, Glu-70, and Asp-143 contribute to the active site. Residues Asp-10, Glu-70, and Asp-143 each contribute to the Mg(2+) site.

Belongs to the RuvC family. In terms of assembly, homodimer which binds Holliday junction (HJ) DNA. The HJ becomes 2-fold symmetrical on binding to RuvC with unstacked arms; it has a different conformation from HJ DNA in complex with RuvA. In the full resolvosome a probable DNA-RuvA(4)-RuvB(12)-RuvC(2) complex forms which resolves the HJ. Mg(2+) is required as a cofactor.

The protein localises to the cytoplasm. It carries out the reaction Endonucleolytic cleavage at a junction such as a reciprocal single-stranded crossover between two homologous DNA duplexes (Holliday junction).. In terms of biological role, the RuvA-RuvB-RuvC complex processes Holliday junction (HJ) DNA during genetic recombination and DNA repair. Endonuclease that resolves HJ intermediates. Cleaves cruciform DNA by making single-stranded nicks across the HJ at symmetrical positions within the homologous arms, yielding a 5'-phosphate and a 3'-hydroxyl group; requires a central core of homology in the junction. The consensus cleavage sequence is 5'-(A/T)TT(C/G)-3'. Cleavage occurs on the 3'-side of the TT dinucleotide at the point of strand exchange. HJ branch migration catalyzed by RuvA-RuvB allows RuvC to scan DNA until it finds its consensus sequence, where it cleaves and resolves the cruciform DNA. In Thermotoga maritima (strain ATCC 43589 / DSM 3109 / JCM 10099 / NBRC 100826 / MSB8), this protein is Crossover junction endodeoxyribonuclease RuvC.